Reading from the N-terminus, the 62-residue chain is Photosystem II reaction center protein Z (62 aa).

2 consecutive transmembrane segments (helical) span residues 8–28 and 41–61; these read SVFA…VVLA and FSGA…NSFI.

It belongs to the PsbZ family. As to quaternary structure, PSII is composed of 1 copy each of membrane proteins PsbA, PsbB, PsbC, PsbD, PsbE, PsbF, PsbH, PsbI, PsbJ, PsbK, PsbL, PsbM, PsbT, PsbY, PsbZ, Psb30/Ycf12, at least 3 peripheral proteins of the oxygen-evolving complex and a large number of cofactors. It forms dimeric complexes.

Its subcellular location is the plastid. The protein resides in the chloroplast thylakoid membrane. Its function is as follows. May control the interaction of photosystem II (PSII) cores with the light-harvesting antenna, regulates electron flow through the 2 photosystem reaction centers. PSII is a light-driven water plastoquinone oxidoreductase, using light energy to abstract electrons from H(2)O, generating a proton gradient subsequently used for ATP formation. This chain is Photosystem II reaction center protein Z, found in Chaetosphaeridium globosum (Charophycean green alga).